A 136-amino-acid chain; its full sequence is Large ribosomal subunit protein uL16 (136 aa).

This sequence belongs to the universal ribosomal protein uL16 family. In terms of assembly, part of the 50S ribosomal subunit.

In terms of biological role, binds 23S rRNA and is also seen to make contacts with the A and possibly P site tRNAs. The sequence is that of Large ribosomal subunit protein uL16 from Vibrio campbellii (strain ATCC BAA-1116).